The primary structure comprises 139 residues: Trafficking protein particle complex subunit 2-like protein (139 aa).

It belongs to the TRAPP small subunits family. Sedlin subfamily. Component of the multisubunit TRAPP (transport protein particle) complex, which includes at least TRAPPC2, TRAPPC2L, TRAPPC3, TRAPPC3L, TRAPPC4, TRAPPC5, TRAPPC8, TRAPPC9, TRAPPC10, TRAPPC11 and TRAPPC12. Interacts with the heterodimer TRAPPC3-TRAPPC6A.

It localises to the cytoplasm. It is found in the perinuclear region. The protein localises to the endoplasmic reticulum. Its subcellular location is the golgi apparatus. In terms of biological role, may play a role in vesicular transport from endoplasmic reticulum to Golgi. This chain is Trafficking protein particle complex subunit 2-like protein (Trappc2l), found in Rattus norvegicus (Rat).